The sequence spans 170 residues: CASP-like protein 1F1 (170 aa).

Topologically, residues 1-16 are cytoplasmic; the sequence is MMGDNEGRRTPLLNLG. Residues 17–37 form a helical membrane-spanning segment; the sequence is VQVSMRVLIIGAAMASMWVMI. At 38–62 the chain is on the extracellular side; it reads TNREVASVYGIAFEAKYSYSSAFRY. The chain crosses the membrane as a helical span at residues 63-83; sequence LVYAQIAVCAATLFTLVWACL. Residues 84–88 lie on the Cytoplasmic side of the membrane; sequence AVRRR. A helical transmembrane segment spans residues 89 to 109; that stretch reads GLVFALFFFDLLTTLTAISAF. The Extracellular portion of the chain corresponds to 110–141; that stretch reads SAAFAEGYVGKYGNKQAGWLPICGYVHVYCSR. The helical transmembrane segment at 142 to 162 threads the bilayer; it reads VTISLAMSFASFVLLFILTVL. The Cytoplasmic segment spans residues 163-170; the sequence is TASSARHY.

Belongs to the Casparian strip membrane proteins (CASP) family. Homodimer and heterodimers.

Its subcellular location is the cell membrane. In Arabidopsis lyrata subsp. lyrata (Lyre-leaved rock-cress), this protein is CASP-like protein 1F1.